We begin with the raw amino-acid sequence, 166 residues long: MDLIRQLEAEQAQKIAAKRTLPDFSPGDTLRVQVRVTEGNRTRVQAFEGVCIARSGSGLQENFTVRKISYGEGVERVFPVYSPLVEAVEVVRRGKVRRAKLYYLRDRRGKSARISENTGARARKLNDAEREAAAQERARIEAEKVAAAEALAAEKAAAEAAEAKSE.

The protein belongs to the bacterial ribosomal protein bL19 family.

Functionally, this protein is located at the 30S-50S ribosomal subunit interface and may play a role in the structure and function of the aminoacyl-tRNA binding site. This chain is Large ribosomal subunit protein bL19, found in Chelativorans sp. (strain BNC1).